A 245-amino-acid polypeptide reads, in one-letter code: Orotidine 5'-phosphate decarboxylase (245 aa).

Residues Asp-22, Lys-44, 71–80, Thr-131, Arg-192, Gln-201, Gly-221, and Arg-222 each bind substrate; that span reads DLKFHDIPNT. Lys-73 acts as the Proton donor in catalysis.

The protein belongs to the OMP decarboxylase family. Type 1 subfamily. As to quaternary structure, homodimer.

It catalyses the reaction orotidine 5'-phosphate + H(+) = UMP + CO2. It participates in pyrimidine metabolism; UMP biosynthesis via de novo pathway; UMP from orotate: step 2/2. In terms of biological role, catalyzes the decarboxylation of orotidine 5'-monophosphate (OMP) to uridine 5'-monophosphate (UMP). In Salmonella gallinarum (strain 287/91 / NCTC 13346), this protein is Orotidine 5'-phosphate decarboxylase.